Here is a 719-residue protein sequence, read N- to C-terminus: DNA replication licensing factor MCM7 (719 aa).

Ala-2 is subject to N-acetylalanine. Glycyl lysine isopeptide (Lys-Gly) (interchain with G-Cter in SUMO2) cross-links involve residues Lys-15 and Lys-28. A phosphoserine mark is found at Ser-121 and Ser-314. Positions 332–538 (FYEKLAASIA…NDLRLAQHIT (207 aa)) constitute an MCM domain. Tyr-345 contacts ATP. Ser-365 is modified (phosphoserine). Gly-384, Ala-386, Lys-387, Ser-388, and Asn-489 together coordinate ATP. Ser-500 carries the phosphoserine modification. The Arginine finger motif lies at 513 to 516 (SRFD). Arg-514 provides a ligand contact to ATP. Residues 521-564 (IQDRPDRDNDLRLAQHITYVHQHSRQPPAQFEPLDMKLMRRYIA) are interaction with RAD17. The tract at residues 577–719 (LADYITAAYV…NTARTRITFV (143 aa)) is interaction with ATRIP. Arg-604 is a binding site for ATP. Ser-678 is subject to Phosphoserine.

This sequence belongs to the MCM family. Component of the MCM2-7 complex. The complex forms a toroidal hexameric ring with the proposed subunit order MCM2-MCM6-MCM4-MCM7-MCM3-MCM5. Component of the CMG helicase complex, a hexameric ring of related MCM2-7 subunits stabilized by CDC45 and the tetrameric GINS complex. Interacts with the ATR-ATRIP complex and with RAD17. Interacts with TIPIN. Interacts with MCMBP. Interacts with ANKRD17. Component of the replisome complex composed of at least DONSON, MCM2, MCM7, PCNA and TICRR. O-glycosylated (O-GlcNAcylated), in a cell cycle-dependent manner. Post-translationally, ubiquitinated by ECS(LRR1) E3 ubiquitin-protein ligase complex when forks converge following formation of DNA interstrand cross-links. During mitosis, ubiquitinated by TRAIP when forks converge following formation of DNA interstrand cross-links. Short ubiquitin chains on MCM7 promote recruitment of DNA glycosylase NEIL3. If the interstrand cross-link cannot be cleaved by NEIL3, the ubiquitin chains continue to grow on MCM7, promoting the unloading of the CMG helicase complex by the VCP/p97 ATPase.

The protein resides in the nucleus. It localises to the chromosome. The catalysed reaction is ATP + H2O = ADP + phosphate + H(+). Its function is as follows. Acts as a component of the MCM2-7 complex (MCM complex) which is the replicative helicase essential for 'once per cell cycle' DNA replication initiation and elongation in eukaryotic cells. Core component of CDC45-MCM-GINS (CMG) helicase, the molecular machine that unwinds template DNA during replication, and around which the replisome is built. The active ATPase sites in the MCM2-7 ring are formed through the interaction surfaces of two neighboring subunits such that a critical structure of a conserved arginine finger motif is provided in trans relative to the ATP-binding site of the Walker A box of the adjacent subunit. The six ATPase active sites, however, are likely to contribute differentially to the complex helicase activity. Required for S-phase checkpoint activation upon UV-induced damage. The polypeptide is DNA replication licensing factor MCM7 (MCM7) (Bos taurus (Bovine)).